The following is an 873-amino-acid chain: Alanine--tRNA ligase (873 aa).

Residues histidine 562, histidine 566, cysteine 664, and histidine 668 each coordinate Zn(2+).

Belongs to the class-II aminoacyl-tRNA synthetase family. It depends on Zn(2+) as a cofactor.

It localises to the cytoplasm. It carries out the reaction tRNA(Ala) + L-alanine + ATP = L-alanyl-tRNA(Ala) + AMP + diphosphate. In terms of biological role, catalyzes the attachment of alanine to tRNA(Ala) in a two-step reaction: alanine is first activated by ATP to form Ala-AMP and then transferred to the acceptor end of tRNA(Ala). Also edits incorrectly charged Ser-tRNA(Ala) and Gly-tRNA(Ala) via its editing domain. This chain is Alanine--tRNA ligase, found in Shewanella amazonensis (strain ATCC BAA-1098 / SB2B).